The primary structure comprises 175 residues: Large ribosomal subunit protein uL10 (175 aa).

This sequence belongs to the universal ribosomal protein uL10 family. As to quaternary structure, part of the ribosomal stalk of the 50S ribosomal subunit. The N-terminus interacts with L11 and the large rRNA to form the base of the stalk. The C-terminus forms an elongated spine to which L12 dimers bind in a sequential fashion forming a multimeric L10(L12)X complex.

Forms part of the ribosomal stalk, playing a central role in the interaction of the ribosome with GTP-bound translation factors. In Xylella fastidiosa (strain M23), this protein is Large ribosomal subunit protein uL10.